The chain runs to 257 residues: UPF0246 protein Spea_1078 (257 aa).

It belongs to the UPF0246 family.

This is UPF0246 protein Spea_1078 from Shewanella pealeana (strain ATCC 700345 / ANG-SQ1).